Consider the following 586-residue polypeptide: Glutathione S-transferase C-terminal domain-containing protein homolog (586 aa).

One can recognise a GST C-terminal domain in the interval 121-276 (LGFKESCLLA…GTCAKILGDL (156 aa)).

It belongs to the GSTCD family.

This is Glutathione S-transferase C-terminal domain-containing protein homolog from Drosophila pseudoobscura pseudoobscura (Fruit fly).